Consider the following 545-residue polypeptide: MQYIVVTGGVISGLGKGTITSSIGHILKDSGIKVSAVKIDPYINYDAGTMNPYQHGEVFVLDDGGEVDLDLGNYERFMNINLSRDNNITTGKVYLEVIQKERHGDYLGKTVQIIPHITDEIKRRIREVARTSGADVVLIEVGGTVGDIESMPFLEALRQLKREEQNVVFAHVTLVPEIGPTMEQKTKPTQHSVKALREIGIQPDIIFARSKQKLTEETKSRISLFTDVPVEGIISVSDVENVYLLPQMMVNEGLITRLSKLLNMNIEYRDSWTSYAENIRHPRDRVKVAIVGKYVDLHDAYISHKEAFSHVTGNTGIAVDIMWIDSEKVKNDQSVLSEADAILIPGGFGYRGVEGKIAATRYAMENGVPFLGICLGFQVAVIAVARYVLGLDGANSTEFDEKTKYPVVDILPEQRGVKDMGGTMRLGSKKVVIKKGTLAHRIYGADVIYERHRHRYEVNPDYIDMIEKAGFKFSATDEEGIRMEILERPGDESFIATQYHSEFKSRPLDPSKVHLHLVEQALIFKHRRMGENHEGYATAASSQGQ.

The segment at 1 to 264 is amidoligase domain; that stretch reads MQYIVVTGGV…ITRLSKLLNM (264 aa). S12 is a binding site for CTP. S12 is a binding site for UTP. 13–18 contacts ATP; that stretch reads GLGKGT. Y53 is a binding site for L-glutamine. D70 contributes to the ATP binding site. Mg(2+) is bound by residues D70 and E140. Residues 147–149, 185–190, and R221 contribute to the CTP site; these read DIE and KTKPTQ. UTP is bound by residues 185 to 190 and R221; that span reads KTKPTQ. Positions 294–527 constitute a Glutamine amidotransferase type-1 domain; it reads YVDLHDAYIS…VEQALIFKHR (234 aa). G347 serves as a coordination point for L-glutamine. C374 serves as the catalytic Nucleophile; for glutamine hydrolysis. Residues 375 to 378, E398, and R455 contribute to the L-glutamine site; that span reads LGFQ. Catalysis depends on residues H500 and E502.

It belongs to the CTP synthase family. In terms of assembly, homotetramer.

The enzyme catalyses UTP + L-glutamine + ATP + H2O = CTP + L-glutamate + ADP + phosphate + 2 H(+). The catalysed reaction is L-glutamine + H2O = L-glutamate + NH4(+). It catalyses the reaction UTP + NH4(+) + ATP = CTP + ADP + phosphate + 2 H(+). The protein operates within pyrimidine metabolism; CTP biosynthesis via de novo pathway; CTP from UDP: step 2/2. Its activity is regulated as follows. Allosterically activated by GTP, when glutamine is the substrate; GTP has no effect on the reaction when ammonia is the substrate. The allosteric effector GTP functions by stabilizing the protein conformation that binds the tetrahedral intermediate(s) formed during glutamine hydrolysis. Inhibited by the product CTP, via allosteric rather than competitive inhibition. Its function is as follows. Catalyzes the ATP-dependent amination of UTP to CTP with either L-glutamine or ammonia as the source of nitrogen. Regulates intracellular CTP levels through interactions with the four ribonucleotide triphosphates. This chain is CTP synthase, found in Thermoplasma acidophilum (strain ATCC 25905 / DSM 1728 / JCM 9062 / NBRC 15155 / AMRC-C165).